A 546-amino-acid polypeptide reads, in one-letter code: CTP synthase (546 aa).

The amidoligase domain stretch occupies residues 1 to 264; that stretch reads MRYIVVTGGV…TKYIMKAMRL (264 aa). Position 12 (Ser-12) interacts with CTP. Ser-12 serves as a coordination point for UTP. Residues 13-18 and Asp-70 contribute to the ATP site; that span reads GLGKGI. The Mg(2+) site is built by Asp-70 and Glu-140. Residues 147-149, 185-190, and Lys-221 contribute to the CTP site; these read DIE and KTKPTQ. Residues 185–190 and Lys-221 contribute to the UTP site; that span reads KTKPTQ. The Glutamine amidotransferase type-1 domain maps to 298-534; that stretch reads GSQCTDPMKD…VEAMKAQRLR (237 aa). Residue Gly-357 coordinates L-glutamine. Cys-384 acts as the Nucleophile; for glutamine hydrolysis in catalysis. Residues 385–388, Glu-408, and Arg-464 contribute to the L-glutamine site; that span reads FGMQ. Active-site residues include His-507 and Glu-509.

This sequence belongs to the CTP synthase family. As to quaternary structure, homotetramer.

It catalyses the reaction UTP + L-glutamine + ATP + H2O = CTP + L-glutamate + ADP + phosphate + 2 H(+). The enzyme catalyses L-glutamine + H2O = L-glutamate + NH4(+). It carries out the reaction UTP + NH4(+) + ATP = CTP + ADP + phosphate + 2 H(+). The protein operates within pyrimidine metabolism; CTP biosynthesis via de novo pathway; CTP from UDP: step 2/2. Its activity is regulated as follows. Allosterically activated by GTP, when glutamine is the substrate; GTP has no effect on the reaction when ammonia is the substrate. The allosteric effector GTP functions by stabilizing the protein conformation that binds the tetrahedral intermediate(s) formed during glutamine hydrolysis. Inhibited by the product CTP, via allosteric rather than competitive inhibition. Its function is as follows. Catalyzes the ATP-dependent amination of UTP to CTP with either L-glutamine or ammonia as the source of nitrogen. Regulates intracellular CTP levels through interactions with the four ribonucleotide triphosphates. The chain is CTP synthase from Methanothrix thermoacetophila (strain DSM 6194 / JCM 14653 / NBRC 101360 / PT) (Methanosaeta thermophila).